The following is a 916-amino-acid chain: Translation initiation factor IF-2 (916 aa).

Positions 151-191 are enriched in basic and acidic residues; sequence NLDEQQRLAESDRARDEAIQRKRDEEQAAKDRVEAERKAAE. 2 disordered regions span residues 151–262 and 280–328; these read NLDE…SHVM and HLSA…ERPT. Low complexity-rich tracts occupy residues 192–243 and 293–305; these read EAAA…ATPA and RGKP…SSSS. Positions 415–584 constitute a tr-type G domain; sequence SRPPVVTIMG…SLQAEVLELK (170 aa). The interval 424–431 is G1; that stretch reads GHVDHGKT. 424 to 431 contacts GTP; the sequence is GHVDHGKT. The tract at residues 449 to 453 is G2; it reads GITQH. The G3 stretch occupies residues 470-473; the sequence is DTPG. GTP-binding positions include 470–474 and 524–527; these read DTPGH and NKID. A G4 region spans residues 524 to 527; it reads NKID. The tract at residues 560–562 is G5; it reads SAK.

This sequence belongs to the TRAFAC class translation factor GTPase superfamily. Classic translation factor GTPase family. IF-2 subfamily.

Its subcellular location is the cytoplasm. In terms of biological role, one of the essential components for the initiation of protein synthesis. Protects formylmethionyl-tRNA from spontaneous hydrolysis and promotes its binding to the 30S ribosomal subunits. Also involved in the hydrolysis of GTP during the formation of the 70S ribosomal complex. The protein is Translation initiation factor IF-2 of Xanthomonas campestris pv. campestris (strain B100).